We begin with the raw amino-acid sequence, 1017 residues long: Disease resistance protein RML1B (1017 aa).

In terms of domain architecture, TIR spans 12–176 (YKFNVFASFH…KIARDVLDKL (165 aa)). Residue Glu87 is part of the active site. One can recognise an NB-ARC domain in the interval 191–447 (EAHLREIKSL…HIAIFFNKED (257 aa)). 10 LRR repeats span residues 539–562 (ISRI…QFLK), 583–605 (PCLL…TFNP), 606–628 (EHLV…TQPL), 629–652 (KNLK…SNAT), 654–675 (LEYL…ISHL), 676–698 (HKLE…HMNL), 699–724 (ESLQ…NIRY), 738–760 (CPGL…THLP), 761–782 (TSLT…CFKS), and 784–809 (HQLK…SLLT).

It catalyses the reaction NAD(+) + H2O = ADP-D-ribose + nicotinamide + H(+). TIR-NB-LRR receptor-like protein that confers resistance to the pathogen Leptosphaeria maculans (blackleg disease). This is Disease resistance protein RML1B from Arabidopsis thaliana (Mouse-ear cress).